Here is a 310-residue protein sequence, read N- to C-terminus: Protein LRATD2 (310 aa).

Positions 1–76 (MGNQVEKLTH…PPPQPQPYDP (76 aa)) are disordered. Gly residues predominate over residues 54-64 (PDGGGLPDGGD). Residues 65–74 (GPPPPQPQPY) show a composition bias toward pro residues. The 96-residue stretch at 122-217 (VEFVSQAQYP…CRYGKREFKI (96 aa)) folds into the LRAT domain. The disordered stretch occupies residues 274 to 310 (HPAEPEEGDSNVARTTPPPGRPPAPSSEEEDGEAVAH). The segment covering 289–298 (TPPPGRPPAP) has biased composition (pro residues). Residues 300–310 (SEEEDGEAVAH) show a composition bias toward acidic residues.

The protein belongs to the LRATD family. Expressed in esophageal squamous cell carcinomas.

This chain is Protein LRATD2, found in Homo sapiens (Human).